The sequence spans 450 residues: Chromosomal replication initiator protein DnaA 2 (450 aa).

Positions 1 to 87 are domain I, interacts with DnaA modulators; that stretch reads MLTCNECTTW…LEFVVAEHKK (87 aa). The segment at 87–114 is domain II; it reads KPSAPVASQKESNEGISEVFEETKDFEL. The tract at residues 115–330 is domain III, AAA+ region; sequence KLNLSYRFDN…GAINKLTAYC (216 aa). G159, G161, K162, and T163 together coordinate ATP. The domain IV, binds dsDNA stretch occupies residues 331–450; sequence RLFGKSLTET…VNLCKNHIVG (120 aa).

The protein belongs to the DnaA family. As to quaternary structure, oligomerizes as a right-handed, spiral filament on DNA at oriC.

Its subcellular location is the cytoplasm. Functionally, plays an essential role in the initiation and regulation of chromosomal replication. ATP-DnaA binds to the origin of replication (oriC) to initiate formation of the DNA replication initiation complex once per cell cycle. Binds the DnaA box (a 9 base pair repeat at the origin) and separates the double-stranded (ds)DNA. Forms a right-handed helical filament on oriC DNA; dsDNA binds to the exterior of the filament while single-stranded (ss)DNA is stabiized in the filament's interior. The ATP-DnaA-oriC complex binds and stabilizes one strand of the AT-rich DNA unwinding element (DUE), permitting loading of DNA polymerase. After initiation quickly degrades to an ADP-DnaA complex that is not apt for DNA replication. Binds acidic phospholipids. The sequence is that of Chromosomal replication initiator protein DnaA 2 from Chlamydia pneumoniae (Chlamydophila pneumoniae).